The sequence spans 263 residues: tRNA pseudouridine synthase A (263 aa).

The Nucleophile role is filled by Asp51. Residue Tyr106 participates in substrate binding.

Belongs to the tRNA pseudouridine synthase TruA family.

It carries out the reaction uridine(38/39/40) in tRNA = pseudouridine(38/39/40) in tRNA. Functionally, formation of pseudouridine at positions 38, 39 and 40 in the anticodon stem and loop of transfer RNAs. This Pyrococcus abyssi (strain GE5 / Orsay) protein is tRNA pseudouridine synthase A.